Here is a 623-residue protein sequence, read N- to C-terminus: ATP-dependent lipid A-core flippase (623 aa).

5 helical membrane passes run 66 to 86 (LVLAVLLMAGAAATQPTLAVI), 103 to 123 (VWFLPLAVVGLILLRGICNFF), 190 to 210 (LVVIALIGVLLYMSWALTLII), 290 to 310 (LTPLTQVCISVAVGAVIAVAL), and 317 to 337 (ALTVGSFASFMAALAQIFDPI). The region spanning 67–349 (VLAVLLMAGA…LTNLAGKMQK (283 aa)) is the ABC transmembrane type-1 domain. Residues 382–618 (VEFRAVSHRF…NGLYASLYNM (237 aa)) enclose the ABC transporter domain. 416–423 (GRSGSGKT) lines the ATP pocket.

The protein belongs to the ABC transporter superfamily. Lipid exporter (TC 3.A.1.106) family. In terms of assembly, homodimer.

It is found in the cell inner membrane. It carries out the reaction ATP + H2O + lipid A-core oligosaccharideSide 1 = ADP + phosphate + lipid A-core oligosaccharideSide 2.. Functionally, involved in lipopolysaccharide (LPS) biosynthesis. Translocates lipid A-core from the inner to the outer leaflet of the inner membrane. Transmembrane domains (TMD) form a pore in the inner membrane and the ATP-binding domain (NBD) is responsible for energy generation. This Bordetella bronchiseptica (strain ATCC BAA-588 / NCTC 13252 / RB50) (Alcaligenes bronchisepticus) protein is ATP-dependent lipid A-core flippase.